Reading from the N-terminus, the 540-residue chain is Chaperonin GroEL (540 aa).

ATP is bound by residues 30-33 (TLGP), lysine 51, 87-91 (DGTTT), glycine 415, 479-481 (NAA), and aspartate 495.

Belongs to the chaperonin (HSP60) family. As to quaternary structure, forms a cylinder of 14 subunits composed of two heptameric rings stacked back-to-back. Interacts with the co-chaperonin GroES.

The protein resides in the cytoplasm. It catalyses the reaction ATP + H2O + a folded polypeptide = ADP + phosphate + an unfolded polypeptide.. Functionally, together with its co-chaperonin GroES, plays an essential role in assisting protein folding. The GroEL-GroES system forms a nano-cage that allows encapsulation of the non-native substrate proteins and provides a physical environment optimized to promote and accelerate protein folding. The chain is Chaperonin GroEL from Pluralibacter gergoviae (Enterobacter gergoviae).